Here is a 233-residue protein sequence, read N- to C-terminus: NAD-dependent protein deacylase (233 aa).

The Deacetylase sirtuin-type domain maps to 1–230 (MKNIMILSGA…ALDIENFMKD (230 aa)). 9 to 28 (GAGLSAPSGLKTFRDNDGLW) contributes to the NAD(+) binding site. Residues Y53 and R56 each coordinate substrate. 88 to 91 (QNVD) is a binding site for NAD(+). The active-site Proton acceptor is the H106. Residues C114, C117, C133, and C136 each contribute to the Zn(2+) site. NAD(+) contacts are provided by residues 172-174 (GTS) and 200-202 (NLE).

Belongs to the sirtuin family. Class III subfamily. The cofactor is Zn(2+).

It localises to the cytoplasm. The catalysed reaction is N(6)-acetyl-L-lysyl-[protein] + NAD(+) + H2O = 2''-O-acetyl-ADP-D-ribose + nicotinamide + L-lysyl-[protein]. The enzyme catalyses N(6)-succinyl-L-lysyl-[protein] + NAD(+) + H2O = 2''-O-succinyl-ADP-D-ribose + nicotinamide + L-lysyl-[protein]. NAD-dependent lysine deacetylase and desuccinylase that specifically removes acetyl and succinyl groups on target proteins. Modulates the activities of several proteins which are inactive in their acylated form. The polypeptide is NAD-dependent protein deacylase (Campylobacter jejuni subsp. jejuni serotype O:2 (strain ATCC 700819 / NCTC 11168)).